The chain runs to 665 residues: Translation factor guf1, mitochondrial (665 aa).

The transit peptide at 1 to 40 (MRGCLQLARWLSAAPTRPAASHWPGLCAAPRFFSHSAILR) directs the protein to the mitochondrion. A tr-type G domain is found at 67-247 (ERYRNFCIVA…TVVDKIPAPI (181 aa)). GTP contacts are provided by residues 76-83 (AHVDHGKS), 140-144 (DTPGH), and 194-197 (NKVD).

Belongs to the TRAFAC class translation factor GTPase superfamily. Classic translation factor GTPase family. LepA subfamily.

It localises to the mitochondrion inner membrane. It carries out the reaction GTP + H2O = GDP + phosphate + H(+). Its function is as follows. Promotes mitochondrial protein synthesis. May act as a fidelity factor of the translation reaction, by catalyzing a one-codon backward translocation of tRNAs on improperly translocated ribosomes. Binds to mitochondrial ribosomes in a GTP-dependent manner. In Aspergillus terreus (strain NIH 2624 / FGSC A1156), this protein is Translation factor guf1, mitochondrial (guf1).